Here is a 586-residue protein sequence, read N- to C-terminus: Putative Lon protease homolog (586 aa).

In terms of domain architecture, Lon proteolytic spans glycine 346–leucine 543. Catalysis depends on residues serine 438 and lysine 481.

This sequence belongs to the peptidase S16 family.

The polypeptide is Putative Lon protease homolog (ycbZ) (Escherichia coli (strain K12)).